A 455-amino-acid chain; its full sequence is Glutamate-1-semialdehyde 2,1-aminomutase (455 aa).

Lys-286 carries the N6-(pyridoxal phosphate)lysine modification.

It belongs to the class-III pyridoxal-phosphate-dependent aminotransferase family. HemL subfamily. In terms of assembly, homodimer. The cofactor is pyridoxal 5'-phosphate.

Its subcellular location is the cytoplasm. The enzyme catalyses (S)-4-amino-5-oxopentanoate = 5-aminolevulinate. Its pathway is porphyrin-containing compound metabolism; protoporphyrin-IX biosynthesis; 5-aminolevulinate from L-glutamyl-tRNA(Glu): step 2/2. This is Glutamate-1-semialdehyde 2,1-aminomutase from Clavibacter michiganensis subsp. michiganensis (strain NCPPB 382).